Consider the following 227-residue polypeptide: Homeobox protein HD-10 (227 aa).

Residues Phe30–Thr89 constitute a DNA-binding region (homeobox). The disordered stretch occupies residues Leu88–Lys115. Polar residues predominate over residues Lys92 to Thr102.

Its subcellular location is the nucleus. This Encephalitozoon cuniculi (strain GB-M1) (Microsporidian parasite) protein is Homeobox protein HD-10 (HD-10).